The following is a 337-amino-acid chain: UDP-N-acetylenolpyruvoylglucosamine reductase (337 aa).

Residues 17–186 enclose the FAD-binding PCMH-type domain; sequence IEAKAKQFIA…TSVIYKLTKR (170 aa). Residue R162 is part of the active site. The active-site Proton donor is the S237. E333 is a catalytic residue.

It belongs to the MurB family. It depends on FAD as a cofactor.

It localises to the cytoplasm. It carries out the reaction UDP-N-acetyl-alpha-D-muramate + NADP(+) = UDP-N-acetyl-3-O-(1-carboxyvinyl)-alpha-D-glucosamine + NADPH + H(+). It functions in the pathway cell wall biogenesis; peptidoglycan biosynthesis. Its function is as follows. Cell wall formation. This chain is UDP-N-acetylenolpyruvoylglucosamine reductase, found in Flavobacterium johnsoniae (strain ATCC 17061 / DSM 2064 / JCM 8514 / BCRC 14874 / CCUG 350202 / NBRC 14942 / NCIMB 11054 / UW101) (Cytophaga johnsonae).